A 361-amino-acid chain; its full sequence is S-adenosylmethionine:tRNA ribosyltransferase-isomerase (361 aa).

Belongs to the QueA family. In terms of assembly, monomer.

Its subcellular location is the cytoplasm. It carries out the reaction 7-aminomethyl-7-carbaguanosine(34) in tRNA + S-adenosyl-L-methionine = epoxyqueuosine(34) in tRNA + adenine + L-methionine + 2 H(+). The protein operates within tRNA modification; tRNA-queuosine biosynthesis. In terms of biological role, transfers and isomerizes the ribose moiety from AdoMet to the 7-aminomethyl group of 7-deazaguanine (preQ1-tRNA) to give epoxyqueuosine (oQ-tRNA). This chain is S-adenosylmethionine:tRNA ribosyltransferase-isomerase, found in Rhizobium etli (strain ATCC 51251 / DSM 11541 / JCM 21823 / NBRC 15573 / CFN 42).